A 129-amino-acid chain; its full sequence is M-zodatoxin-Lt8j (129 aa).

The first 20 residues, 1 to 20 (MKYFVVALALVAAFACIAES), serve as a signal peptide directing secretion. A propeptide spanning residues 21–60 (KPAESEHELAEVEEENELADLEDAVWLEHLADLSDLEEAR) is cleaved from the precursor.

It belongs to the cationic peptide 06 (cytoinsectotoxin) family. Expressed by the venom gland.

It localises to the secreted. In terms of biological role, insecticidal, cytolytic and antimicrobial peptide. Forms voltage-dependent, ion-permeable channels in membranes. At high concentration causes cell membrane lysis. The sequence is that of M-zodatoxin-Lt8j (cit 1-9) from Lachesana tarabaevi (Spider).